The chain runs to 472 residues: Ribosomal protein uS12 methylthiotransferase RimO (472 aa).

The MTTase N-terminal domain occupies 1–114; it reads MKFHIITLGC…IGDVVDTLQR (114 aa). Positions 10, 46, 78, 171, 175, and 178 each coordinate [4Fe-4S] cluster. The region spanning 157–388 is the Radical SAM core domain; that stretch reads RITGPSAYLK…MRLQQGISRQ (232 aa). Positions 391-460 constitute a TRAM domain; it reads RRWVGRVIRV…DYDLWGEMVE (70 aa).

It belongs to the methylthiotransferase family. RimO subfamily. Requires [4Fe-4S] cluster as cofactor.

The protein resides in the cytoplasm. The catalysed reaction is L-aspartate(89)-[ribosomal protein uS12]-hydrogen + (sulfur carrier)-SH + AH2 + 2 S-adenosyl-L-methionine = 3-methylsulfanyl-L-aspartate(89)-[ribosomal protein uS12]-hydrogen + (sulfur carrier)-H + 5'-deoxyadenosine + L-methionine + A + S-adenosyl-L-homocysteine + 2 H(+). Its function is as follows. Catalyzes the methylthiolation of an aspartic acid residue of ribosomal protein uS12. In Roseiflexus sp. (strain RS-1), this protein is Ribosomal protein uS12 methylthiotransferase RimO.